Consider the following 304-residue polypeptide: Non-specific ribonucleoside hydrolase RihC (304 aa).

H233 is a catalytic residue.

Belongs to the IUNH family. RihC subfamily.

Its function is as follows. Hydrolyzes both purine and pyrimidine ribonucleosides with a broad-substrate specificity. This Shigella boydii serotype 4 (strain Sb227) protein is Non-specific ribonucleoside hydrolase RihC.